The following is a 281-amino-acid chain: N-acetyltransferase ECO1 (281 aa).

The segment at 33–57 adopts a CCHH-type zinc-finger fold; the sequence is VKCDKCEMSYSSTSIEDRAIHEKYH. The interval 86 to 105 is disordered; that stretch reads LSRSTGTITPLNSSPLKKSS. Positions 95–105 are enriched in low complexity; sequence PLNSSPLKKSS. Residue Lys-223 is modified to N6-acetyllysine; by autocatalysis.

It belongs to the acetyltransferase family. ECO subfamily. In terms of assembly, binds specifically to CHL12, RFC1, RFC2, RFC3, RFC4, RFC5 and RAD24 when members of an RFC complex. Interacts with CHL1 and MPS3. In terms of processing, autoacetylates in vitro.

Its subcellular location is the nucleus. In terms of biological role, required for establishment of sister chromatid cohesion during S phase but not for its further maintenance during G2 or M phases or for loading the cohesin complex onto DNA. Interacts with the three known alternate replication factor C (RFC) complexes, suggesting that these complexes have essential but redundant activity in cohesion establishment. Acts by acetylating the cohesin complex component SMC3. In vitro, possesses acetyltransferase activity where it can acetylate itself and components of the cohesin complex (MCD1, IRR1 and PDS5), but is unable to acetylate histones. This is N-acetyltransferase ECO1 (ECO1) from Saccharomyces cerevisiae (strain ATCC 204508 / S288c) (Baker's yeast).